Reading from the N-terminus, the 331-residue chain is Putative heat stress transcription factor A-6a (331 aa).

Positions 135–160 are disordered; that stretch reads RRGAGTGSTTPRAVNCGGGGGEGEVE. A coiled-coil region spans residues 156–238; the sequence is EGEVERLRRD…VERKKRRMLA (83 aa). Residues 162 to 212 are hydrophobic repeat HR-A/B; that stretch reads LRRDKEALARELARLRRQQQEARAQLLDMERRVRGTERRQEQCTEFLARAL. Residues 230 to 235 carry the Nuclear localization signal motif; that stretch reads ERKKRR. The short motif at 246–253 is the Nuclear export signal element; it reads LTFEALAL. An AHA1 motif is present at residues 270-279; that stretch reads DMIWYELLGE. An AHA2 motif is present at residues 305 to 313; it reads AEPWEEMGE.

The protein belongs to the HSF family. Class A subfamily. As to quaternary structure, homotrimer. Post-translationally, exhibits temperature-dependent phosphorylation.

It localises to the cytoplasm. It is found in the nucleus. Its function is as follows. Transcriptional regulator that specifically binds DNA of heat shock promoter elements (HSE). The polypeptide is Putative heat stress transcription factor A-6a (HSFA6A) (Oryza sativa subsp. japonica (Rice)).